The following is a 205-amino-acid chain: Imidazole glycerol phosphate synthase subunit HisH (205 aa).

The region spanning Lys3–Gln205 is the Glutamine amidotransferase type-1 domain. Cys81 (nucleophile) is an active-site residue. Active-site residues include His185 and Glu187.

As to quaternary structure, heterodimer of HisH and HisF.

Its subcellular location is the cytoplasm. The enzyme catalyses 5-[(5-phospho-1-deoxy-D-ribulos-1-ylimino)methylamino]-1-(5-phospho-beta-D-ribosyl)imidazole-4-carboxamide + L-glutamine = D-erythro-1-(imidazol-4-yl)glycerol 3-phosphate + 5-amino-1-(5-phospho-beta-D-ribosyl)imidazole-4-carboxamide + L-glutamate + H(+). It catalyses the reaction L-glutamine + H2O = L-glutamate + NH4(+). It functions in the pathway amino-acid biosynthesis; L-histidine biosynthesis; L-histidine from 5-phospho-alpha-D-ribose 1-diphosphate: step 5/9. In terms of biological role, IGPS catalyzes the conversion of PRFAR and glutamine to IGP, AICAR and glutamate. The HisH subunit catalyzes the hydrolysis of glutamine to glutamate and ammonia as part of the synthesis of IGP and AICAR. The resulting ammonia molecule is channeled to the active site of HisF. The polypeptide is Imidazole glycerol phosphate synthase subunit HisH (Prochlorococcus marinus subsp. pastoris (strain CCMP1986 / NIES-2087 / MED4)).